Here is a 118-residue protein sequence, read N- to C-terminus: Small ribosomal subunit protein uS13 (118 aa).

The segment at 94-118 (GLPLRGQRTRTNARTRKGPRKAIRK) is disordered.

This sequence belongs to the universal ribosomal protein uS13 family. As to quaternary structure, part of the 30S ribosomal subunit. Forms a loose heterodimer with protein S19. Forms two bridges to the 50S subunit in the 70S ribosome.

In terms of biological role, located at the top of the head of the 30S subunit, it contacts several helices of the 16S rRNA. In the 70S ribosome it contacts the 23S rRNA (bridge B1a) and protein L5 of the 50S subunit (bridge B1b), connecting the 2 subunits; these bridges are implicated in subunit movement. Contacts the tRNAs in the A and P-sites. This Xanthomonas axonopodis pv. citri (strain 306) protein is Small ribosomal subunit protein uS13.